We begin with the raw amino-acid sequence, 420 residues long: Serine--tRNA ligase (420 aa).

228 to 230 (TAE) is an L-serine binding site. ATP is bound at residue 259–261 (RSE). An L-serine-binding site is contributed by glutamate 282. Residue 346 to 349 (EISS) coordinates ATP. Serine 382 is a binding site for L-serine.

The protein belongs to the class-II aminoacyl-tRNA synthetase family. Type-1 seryl-tRNA synthetase subfamily. As to quaternary structure, homodimer. The tRNA molecule binds across the dimer.

It localises to the cytoplasm. It carries out the reaction tRNA(Ser) + L-serine + ATP = L-seryl-tRNA(Ser) + AMP + diphosphate + H(+). It catalyses the reaction tRNA(Sec) + L-serine + ATP = L-seryl-tRNA(Sec) + AMP + diphosphate + H(+). It functions in the pathway aminoacyl-tRNA biosynthesis; selenocysteinyl-tRNA(Sec) biosynthesis; L-seryl-tRNA(Sec) from L-serine and tRNA(Sec): step 1/1. Catalyzes the attachment of serine to tRNA(Ser). Is also able to aminoacylate tRNA(Sec) with serine, to form the misacylated tRNA L-seryl-tRNA(Sec), which will be further converted into selenocysteinyl-tRNA(Sec). In Mycoplasmoides gallisepticum (strain R(low / passage 15 / clone 2)) (Mycoplasma gallisepticum), this protein is Serine--tRNA ligase.